Here is a 187-residue protein sequence, read N- to C-terminus: Holliday junction branch migration complex subunit RuvA (187 aa).

Positions 1 to 64 (MIEYIRGIIE…EDGFQIFGFK (64 aa)) are domain I. The interval 65–136 (RKEELELFEK…ELKDKVPKEV (72 aa)) is domain II. Residues 136 to 139 (VVVP) form a flexible linker region. Positions 140-187 (KEDSLLNEALEALLALGYTKSEAIYALSDVNCESVEQAVKEALKKLAK) are domain III.

Belongs to the RuvA family. Homotetramer. Forms an RuvA(8)-RuvB(12)-Holliday junction (HJ) complex. HJ DNA is sandwiched between 2 RuvA tetramers; dsDNA enters through RuvA and exits via RuvB. An RuvB hexamer assembles on each DNA strand where it exits the tetramer. Each RuvB hexamer is contacted by two RuvA subunits (via domain III) on 2 adjacent RuvB subunits; this complex drives branch migration. In the full resolvosome a probable DNA-RuvA(4)-RuvB(12)-RuvC(2) complex forms which resolves the HJ.

It is found in the cytoplasm. Its function is as follows. The RuvA-RuvB-RuvC complex processes Holliday junction (HJ) DNA during genetic recombination and DNA repair, while the RuvA-RuvB complex plays an important role in the rescue of blocked DNA replication forks via replication fork reversal (RFR). RuvA specifically binds to HJ cruciform DNA, conferring on it an open structure. The RuvB hexamer acts as an ATP-dependent pump, pulling dsDNA into and through the RuvAB complex. HJ branch migration allows RuvC to scan DNA until it finds its consensus sequence, where it cleaves and resolves the cruciform DNA. This is Holliday junction branch migration complex subunit RuvA from Caldanaerobacter subterraneus subsp. tengcongensis (strain DSM 15242 / JCM 11007 / NBRC 100824 / MB4) (Thermoanaerobacter tengcongensis).